Here is a 251-residue protein sequence, read N- to C-terminus: tRNA-cytidine(32) 2-sulfurtransferase 2 (251 aa).

Residues 33-38 (SGGKDS) carry the PP-loop motif motif. Positions 108, 111, and 199 each coordinate [4Fe-4S] cluster.

This sequence belongs to the TtcA family. As to quaternary structure, homodimer. The cofactor is Mg(2+). [4Fe-4S] cluster is required as a cofactor.

The protein resides in the cytoplasm. The catalysed reaction is cytidine(32) in tRNA + S-sulfanyl-L-cysteinyl-[cysteine desulfurase] + AH2 + ATP = 2-thiocytidine(32) in tRNA + L-cysteinyl-[cysteine desulfurase] + A + AMP + diphosphate + H(+). Its pathway is tRNA modification. Functionally, catalyzes the ATP-dependent 2-thiolation of cytidine in position 32 of tRNA, to form 2-thiocytidine (s(2)C32). The sulfur atoms are provided by the cysteine/cysteine desulfurase (IscS) system. This chain is tRNA-cytidine(32) 2-sulfurtransferase 2, found in Francisella tularensis subsp. tularensis (strain FSC 198).